The following is a 532-amino-acid chain: E3 ubiquitin-protein ligase MGRN1 (532 aa).

Residue glycine 2 is the site of N-myristoyl glycine attachment. Residues glutamate 277–cysteine 316 form an RING-type zinc finger. The Required for TSG101-binding motif lies at proline 384–proline 387. At tyrosine 389 the chain carries Phosphotyrosine. The interval leucine 419 to leucine 518 is disordered. Positions glycine 422–serine 435 are enriched in polar residues. Residues serine 428, serine 449, serine 452, and serine 501 each carry the phosphoserine modification. Positions glutamate 442–aspartate 453 are enriched in acidic residues.

Interacts with MC1R and MC4R. Interacts with TSG101. Interacts with mislocalized cytosolically exposed PRNP; this interaction alters MGRN1 subcellular location and causes lysosomal enlargement. Post-translationally, autoubiquitinated in vitro. As to expression, widely expressed, with highest levels in brain, heart, kidney and liver. In the CNS, especially prominent in the Purkinje cells of the cerebellum. In the skin, expressed in the basal layer of the epidermis and hair follicles, primarily in the outer root sheath. Isoforms 1, 3, 4 and 5 are equally expressed in the liver. Isoforms 1, 3 and 4 are most abundant in brain, kidney and heart, respectively.

It is found in the early endosome. The protein resides in the cytoplasm. Its subcellular location is the cell membrane. The protein localises to the nucleus. The enzyme catalyses S-ubiquitinyl-[E2 ubiquitin-conjugating enzyme]-L-cysteine + [acceptor protein]-L-lysine = [E2 ubiquitin-conjugating enzyme]-L-cysteine + N(6)-ubiquitinyl-[acceptor protein]-L-lysine.. It participates in protein modification; protein ubiquitination. Functionally, E3 ubiquitin-protein ligase. Mediates TSG101 monoubiquitination at multiple sites. Plays a role in the regulation of endosome-to-lysosome trafficking. Impairs MC1R- and MC4R-signaling by competing with GNAS-binding to MCRs and inhibiting agonist-induced cAMP production. Does not inhibit ADRB2-signaling. Does not promote MC1R ubiquitination. Also acts as a negative regulator of hedgehog signaling. The polypeptide is E3 ubiquitin-protein ligase MGRN1 (Mgrn1) (Mus musculus (Mouse)).